A 375-amino-acid chain; its full sequence is Chaperone protein DnaJ (375 aa).

Positions 5 to 70 constitute a J domain; that stretch reads DYYDVLGVNR…QKRGAYDQFG (66 aa). The CR-type zinc finger occupies 135-213; the sequence is GCEKQIRIPS…CHGAGQKKTT (79 aa). Cysteine 148, cysteine 151, cysteine 165, cysteine 168, cysteine 187, cysteine 190, cysteine 201, and cysteine 204 together coordinate Zn(2+). CXXCXGXG motif repeat units lie at residues 148–155, 165–172, 187–194, and 201–208; these read CSTCNGTG, CATCGGHG, CPTCHGTG, and CGSCHGAG.

The protein belongs to the DnaJ family. In terms of assembly, homodimer. Zn(2+) is required as a cofactor.

Its subcellular location is the cytoplasm. Functionally, participates actively in the response to hyperosmotic and heat shock by preventing the aggregation of stress-denatured proteins and by disaggregating proteins, also in an autonomous, DnaK-independent fashion. Unfolded proteins bind initially to DnaJ; upon interaction with the DnaJ-bound protein, DnaK hydrolyzes its bound ATP, resulting in the formation of a stable complex. GrpE releases ADP from DnaK; ATP binding to DnaK triggers the release of the substrate protein, thus completing the reaction cycle. Several rounds of ATP-dependent interactions between DnaJ, DnaK and GrpE are required for fully efficient folding. Also involved, together with DnaK and GrpE, in the DNA replication of plasmids through activation of initiation proteins. The protein is Chaperone protein DnaJ of Chromobacterium violaceum (strain ATCC 12472 / DSM 30191 / JCM 1249 / CCUG 213 / NBRC 12614 / NCIMB 9131 / NCTC 9757 / MK).